A 564-amino-acid polypeptide reads, in one-letter code: Centrosomal protein kizuna (564 aa).

Positions 1 to 21 are disordered; it reads MSEAGRAAAGPCPEVSPSRSQ. The stretch at 28 to 50 forms a coiled coil; it reads RCLRDSETRRLELERKLMEYKSS. 5 disordered regions span residues 178 to 201, 304 to 345, 442 to 465, 487 to 519, and 531 to 564; these read QPAACPNSLTALQGDETDGHPTQA, TGPQ…EDEP, ECGDGSSVQSNESSYSLPSIPNDS, IGNNGSEAKESQEMCSERSSSSERSGDLSRPEF, and AFWGESDDSSSEAVDALRPQTRSPEADDFDDFYD. The span at 313–324 shows a compositional bias: low complexity; that stretch reads QQAASQDSSSSS. Residues 447 to 463 show a composition bias toward polar residues; the sequence is SSVQSNESSYSLPSIPN. Residues 493-519 show a composition bias toward basic and acidic residues; sequence EAKESQEMCSERSSSSERSGDLSRPEF.

The protein belongs to the kizuna family.

The protein resides in the cytoplasm. Its subcellular location is the cytoskeleton. It is found in the microtubule organizing center. The protein localises to the centrosome. It localises to the cilium basal body. Centrosomal protein required for establishing a robust mitotic centrosome architecture that can endure the forces that converge on the centrosomes during spindle formation. Required for stabilizing the expanded pericentriolar material around the centriole. In Gallus gallus (Chicken), this protein is Centrosomal protein kizuna (KIZ).